Here is a 440-residue protein sequence, read N- to C-terminus: D-serine dehydratase (440 aa).

Residue lysine 116 is modified to N6-(pyridoxal phosphate)lysine.

The protein belongs to the serine/threonine dehydratase family. DsdA subfamily. As to quaternary structure, monomer. Pyridoxal 5'-phosphate serves as cofactor.

It catalyses the reaction D-serine = pyruvate + NH4(+). This is D-serine dehydratase from Salmonella typhimurium (strain LT2 / SGSC1412 / ATCC 700720).